We begin with the raw amino-acid sequence, 364 residues long: Geranylfarnesyl diphosphate synthase, chloroplastic (364 aa).

The transit peptide at 1 to 51 (MSHCTIFLYKYFPGKPRYQHCSFLHPLNHKLKSLFLPITGSRFLSNSTFSV) directs the protein to the chloroplast. 3 residues coordinate isopentenyl diphosphate: Lys72, Lys111, and His143. Mg(2+)-binding residues include Asp150 and Asp156. Arg161 provides a ligand contact to dimethylallyl diphosphate. Arg162 contacts isopentenyl diphosphate. 6 residues coordinate dimethylallyl diphosphate: Lys249, Thr250, Gln287, Asp294, Lys304, and Lys314.

This sequence belongs to the FPP/GGPP synthase family. In terms of assembly, monomer. Mg(2+) serves as cofactor. Strongly expressed in glandular trichomes, and, at low levels, in leaves, stems and flowers.

It is found in the plastid. The protein resides in the chloroplast. The enzyme catalyses isopentenyl diphosphate + (2E,6E,10E)-geranylgeranyl diphosphate = (2E,6E,10E,14E)-geranylfarnesyl diphosphate + diphosphate. It catalyses the reaction 2 isopentenyl diphosphate + (2E,6E)-farnesyl diphosphate = (2E,6E,10E,14E)-geranylfarnesyl diphosphate + 2 diphosphate. The catalysed reaction is 3 isopentenyl diphosphate + (2E)-geranyl diphosphate = (2E,6E,10E,14E)-geranylfarnesyl diphosphate + 3 diphosphate. It carries out the reaction 4 isopentenyl diphosphate + dimethylallyl diphosphate = (2E,6E,10E,14E)-geranylfarnesyl diphosphate + 4 diphosphate. The protein operates within secondary metabolite biosynthesis; terpenoid biosynthesis. It functions in the pathway isoprenoid biosynthesis. In terms of biological role, involved in the biosynthesis of leucosceptrane sesterterpenoids natural products, which are playing defensive roles toward herbivorus insects (e.g. Spodoptera exigua). Catalyzes the condensation of isopentenyl pyrophosphate (IDP) with the allylic pyrophosphates to yield geranylfarnesyl diphosphate (GFDP), the C(25) prenyl diphosphate precursor to all sesterterpenoids. Geranylgeranyl diphosphate (GGPP) is the preferred substrate, however dimethylallyl diphosphate (DMADP), farnesyl diphosphate (FDP) and geranyl diphosphate (GDP) can also be used as allylic substrate. In Leucosceptrum canum (Hairy white-wand), this protein is Geranylfarnesyl diphosphate synthase, chloroplastic.